The sequence spans 154 residues: SsrA-binding protein (154 aa).

This sequence belongs to the SmpB family.

It localises to the cytoplasm. Its function is as follows. Required for rescue of stalled ribosomes mediated by trans-translation. Binds to transfer-messenger RNA (tmRNA), required for stable association of tmRNA with ribosomes. tmRNA and SmpB together mimic tRNA shape, replacing the anticodon stem-loop with SmpB. tmRNA is encoded by the ssrA gene; the 2 termini fold to resemble tRNA(Ala) and it encodes a 'tag peptide', a short internal open reading frame. During trans-translation Ala-aminoacylated tmRNA acts like a tRNA, entering the A-site of stalled ribosomes, displacing the stalled mRNA. The ribosome then switches to translate the ORF on the tmRNA; the nascent peptide is terminated with the 'tag peptide' encoded by the tmRNA and targeted for degradation. The ribosome is freed to recommence translation, which seems to be the essential function of trans-translation. This chain is SsrA-binding protein, found in Methylobacillus flagellatus (strain ATCC 51484 / DSM 6875 / VKM B-1610 / KT).